Consider the following 129-residue polypeptide: Small ribosomal subunit protein uS9 (129 aa).

This sequence belongs to the universal ribosomal protein uS9 family.

The chain is Small ribosomal subunit protein uS9 from Chlorobium phaeobacteroides (strain DSM 266 / SMG 266 / 2430).